A 718-amino-acid chain; its full sequence is Kelch-like protein 4 (718 aa).

A disordered region spans residues 46–69 (TPVQGRLKSHSRDRNGLKKSNSPV). A BTB domain is found at 182–249 (CDVLLIAGHL…AYTGVLQLKE (68 aa)). Kelch repeat units lie at residues 430–476 (ALYA…VIDN), 477–523 (KLYV…TLEG), 525–570 (MYAV…ALNN), 571–617 (KLYA…TYNG), 619–670 (LYVV…PLGD), and 671–717 (KLYV…VVKL).

Expressed in adult fibroblasts and in a range of fetal tissues including tongue, palate, and mandible.

It localises to the cytoplasm. The protein localises to the cytoskeleton. The chain is Kelch-like protein 4 (KLHL4) from Homo sapiens (Human).